The primary structure comprises 473 residues: H(+)/Cl(-) exchange transporter ClcA (473 aa).

The Cytoplasmic segment spans residues 1–32 (MKTDTPSLEIPQAARLRRRQLIRQLLERDKTP). Residues 33–69 (LAILFMAAVVGTLVGLAAVAFDKGVSWLQNQRMGALV) form a helical membrane-spanning segment. Topologically, residues 70-76 (HTADNYP) are periplasmic. Residues 77 to 100 (LLLTVAFLCSAVLAMFGYFLVRKY) form a helical membrane-spanning segment. The short motif at 106–110 (GSGIP) is the Selectivity filter part_1 element. Chloride is bound at residue serine 107. Positions 109-116 (IPEIEGAL) form an intramembrane region, helical. Topologically, residues 117–123 (EDQRPVR) are cytoplasmic. 2 consecutive transmembrane segments (helical) span residues 124–141 (WWRV…TLGG) and 148–166 (EGPT…LDIF). A Selectivity filter part_2 motif is present at residues 146-150 (GREGP). Topologically, residues 167–176 (RLKGDEARHT) are cytoplasmic. 2 intramembrane regions (helical) span residues 177–189 (LLAT…LAAA) and 193–201 (PLAGILFII). Residues 202 to 214 (EEMRPQFRYTLIS) are Cytoplasmic-facing. A helical transmembrane segment spans residues 215 to 232 (IKAVFIGVIMSTIMYRIF). Over 233 to 252 (NHEVALIDVGKLSDAPLNTL) the chain is Periplasmic. Residues 253 to 281 (WLYLILGIIFGIFGPIFNKWVLGMQDLLH) traverse the membrane as a helical segment. Residues 282-287 (RVHGGN) are Cytoplasmic-facing. Residues 288 to 309 (ITKWVIMGGAIGGLCGLLGFVA) form a helical membrane-spanning segment. Residues 310–329 (PATSGGGFNLIPIATAGNFS) are Periplasmic-facing. 2 consecutive transmembrane segments (helical) span residues 330 to 349 (MGML…LCFS) and 355 to 376 (GIFA…MVAV). Residues 355–359 (GIFAP) carry the Selectivity filter part_3 motif. The chloride site is built by isoleucine 356 and phenylalanine 357. At 377-386 (ELFPQYHLEA) the chain is on the periplasmic side. An intramembrane region (helical) is located at residues 387 to 401 (GTFAIAGMGALLAAS). The note=Loop between two helices intramembrane region spans 402-404 (IRA). The segment at residues 405 to 416 (PLTGIILVLEMT) is an intramembrane region (helical). An intramembrane region (note=Loop between two helices) is located at residues 417 to 421 (DNYQL). A helical membrane pass occupies residues 422–438 (ILPMIITGLGATLLAQF). Over 439 to 473 (TGGKPLYSAILARTLAKQEAEQLARSKAASASENT) the chain is Cytoplasmic. Residue tyrosine 445 participates in chloride binding.

The protein belongs to the chloride channel (TC 2.A.49) family. ClcA subfamily. Homodimer.

Its subcellular location is the cell inner membrane. It catalyses the reaction 2 chloride(in) + H(+)(out) = 2 chloride(out) + H(+)(in). Its function is as follows. Proton-coupled chloride transporter. Functions as antiport system and exchanges two chloride ions for 1 proton. Probably acts as an electrical shunt for an outwardly-directed proton pump that is linked to amino acid decarboxylation, as part of the extreme acid resistance (XAR) response. The chain is H(+)/Cl(-) exchange transporter ClcA from Escherichia fergusonii (strain ATCC 35469 / DSM 13698 / CCUG 18766 / IAM 14443 / JCM 21226 / LMG 7866 / NBRC 102419 / NCTC 12128 / CDC 0568-73).